The primary structure comprises 553 residues: Putative transport protein YidE (553 aa).

A run of 5 helical transmembrane segments spans residues 4–24 (IALTVSILALVAVVGLFIGNV), 28–48 (GIGLGIGGVLFGGIIVGHFVS), 65–85 (FGLILFVYTIGIQVGPGFFAS), 95–115 (LFAVLIVIIGGLVTAILHKLF), and 158–178 (MSYAMAYPFGICGILFTMWML). RCK C-terminal domains lie at 191-276 (QQHE…VIGQ) and 279-361 (DTSL…VLGN). The next 6 membrane-spanning stretches (helical) occupy residues 371-391 (MLPVFIGIGLGVLLGSIPVFV), 393-413 (GFPAALKLGLAGGPLIMALIL), 439-459 (IVLFLSIVGLKSGGDFVNTLV), 464-484 (LSWIGYGALITAVPLITVGIL), 493-513 (YLTMCGMLAGSMTDPPALAFA), and 533-553 (LVMFLRIITPQLLAVLFWSIG).

This sequence belongs to the AAE transporter (TC 2.A.81) family. YidE subfamily.

The protein resides in the cell membrane. The polypeptide is Putative transport protein YidE (Shigella flexneri serotype 5b (strain 8401)).